The primary structure comprises 201 residues: Peptide deformylase (201 aa).

Fe cation is bound by residues C92 and H134. E135 is an active-site residue. H138 is a Fe cation binding site.

Belongs to the polypeptide deformylase family. It depends on Fe(2+) as a cofactor.

The catalysed reaction is N-terminal N-formyl-L-methionyl-[peptide] + H2O = N-terminal L-methionyl-[peptide] + formate. In terms of biological role, removes the formyl group from the N-terminal Met of newly synthesized proteins. Requires at least a dipeptide for an efficient rate of reaction. N-terminal L-methionine is a prerequisite for activity but the enzyme has broad specificity at other positions. The sequence is that of Peptide deformylase from Rhodopirellula baltica (strain DSM 10527 / NCIMB 13988 / SH1).